The following is a 693-amino-acid chain: Elongation factor G (693 aa).

The 275-residue stretch at 8–282 (KNTRNIGIMA…AAIEYLPSPL (275 aa)) folds into the tr-type G domain. Residues 17–24 (AHIDAGKT), 81–85 (DTPGH), and 135–138 (NKMD) contribute to the GTP site.

The protein belongs to the TRAFAC class translation factor GTPase superfamily. Classic translation factor GTPase family. EF-G/EF-2 subfamily.

The protein resides in the cytoplasm. In terms of biological role, catalyzes the GTP-dependent ribosomal translocation step during translation elongation. During this step, the ribosome changes from the pre-translocational (PRE) to the post-translocational (POST) state as the newly formed A-site-bound peptidyl-tRNA and P-site-bound deacylated tRNA move to the P and E sites, respectively. Catalyzes the coordinated movement of the two tRNA molecules, the mRNA and conformational changes in the ribosome. The sequence is that of Elongation factor G from Macrococcus caseolyticus (strain JCSC5402) (Macrococcoides caseolyticum).